The chain runs to 664 residues: Trifunctional UDP-glucose 4,6-dehydratase/UDP-4-keto-6-deoxy-D-glucose 3,5-epimerase/UDP-4-keto-L-rhamnose-reductase RHM3 (664 aa).

13-19 provides a ligand contact to NAD(+); the sequence is GAAGFIA. T132 contacts substrate. The Proton donor role is filled by D133. Residues E134 and Y159 each act as proton acceptor in the active site. An NADP(+)-binding site is contributed by 386–392; the sequence is GKTGWLG.

The protein in the N-terminal section; belongs to the NAD(P)-dependent epimerase/dehydratase family. dTDP-glucose dehydratase subfamily. This sequence in the C-terminal section; belongs to the dTDP-4-dehydrorhamnose reductase family. The cofactor is NAD(+). NADP(+) serves as cofactor. As to expression, expressed in roots, stems, seedlings, and siliques. Lower expression in inflorescence tips, and leaves.

The enzyme catalyses UDP-alpha-D-glucose = UDP-4-dehydro-6-deoxy-alpha-D-glucose + H2O. Its pathway is carbohydrate biosynthesis. Trifunctional enzyme involved in UDP-beta-L-rhamnose biosynthesis, a precursor of the primary cell wall components rhamnogalacturonan I (RG-I) and rhamnogalacturonan II (RG-II). Catalyzes the dehydration of UDP-glucose to form UDP-4-dehydro-6-deoxy-D-glucose followed by the epimerization of the C3' and C5' positions of UDP-4-dehydro-6-deoxy-D-glucose to form UDP-4-keto-beta-L-rhamnose and the reduction of UDP-4-keto-beta-L-rhamnose to yield UDP-beta-L-rhamnose. The chain is Trifunctional UDP-glucose 4,6-dehydratase/UDP-4-keto-6-deoxy-D-glucose 3,5-epimerase/UDP-4-keto-L-rhamnose-reductase RHM3 from Arabidopsis thaliana (Mouse-ear cress).